We begin with the raw amino-acid sequence, 314 residues long: Probable 5-dehydro-4-deoxyglucarate dehydratase (314 aa).

The protein belongs to the DapA family.

The catalysed reaction is 5-dehydro-4-deoxy-D-glucarate + H(+) = 2,5-dioxopentanoate + CO2 + H2O. It functions in the pathway carbohydrate acid metabolism; D-glucarate degradation; 2,5-dioxopentanoate from D-glucarate: step 2/2. The sequence is that of Probable 5-dehydro-4-deoxyglucarate dehydratase from Bradyrhizobium sp. (strain ORS 278).